The sequence spans 81 residues: Large ribosomal subunit protein uL23 (81 aa).

It belongs to the universal ribosomal protein uL23 family. As to quaternary structure, part of the 50S ribosomal subunit. Contacts protein L29.

In terms of biological role, binds to 23S rRNA. One of the proteins that surrounds the polypeptide exit tunnel on the outside of the ribosome. The chain is Large ribosomal subunit protein uL23 from Saccharolobus solfataricus (strain ATCC 35092 / DSM 1617 / JCM 11322 / P2) (Sulfolobus solfataricus).